The primary structure comprises 368 residues: Probable dual-specificity RNA methyltransferase RlmN (368 aa).

The Proton acceptor role is filled by Glu-109. In terms of domain architecture, Radical SAM core spans 115–355; sequence YPDRVTMCIS…VTIRDTRGQE (241 aa). Cys-122 and Cys-360 are joined by a disulfide. [4Fe-4S] cluster is bound by residues Cys-129, Cys-133, and Cys-136. S-adenosyl-L-methionine is bound by residues 184–185, Ser-218, 241–243, and Asn-317; these read GE and SLH. Cys-360 (S-methylcysteine intermediate) is an active-site residue.

It belongs to the radical SAM superfamily. RlmN family. It depends on [4Fe-4S] cluster as a cofactor.

It is found in the cytoplasm. It carries out the reaction adenosine(2503) in 23S rRNA + 2 reduced [2Fe-2S]-[ferredoxin] + 2 S-adenosyl-L-methionine = 2-methyladenosine(2503) in 23S rRNA + 5'-deoxyadenosine + L-methionine + 2 oxidized [2Fe-2S]-[ferredoxin] + S-adenosyl-L-homocysteine. It catalyses the reaction adenosine(37) in tRNA + 2 reduced [2Fe-2S]-[ferredoxin] + 2 S-adenosyl-L-methionine = 2-methyladenosine(37) in tRNA + 5'-deoxyadenosine + L-methionine + 2 oxidized [2Fe-2S]-[ferredoxin] + S-adenosyl-L-homocysteine. Its function is as follows. Specifically methylates position 2 of adenine 2503 in 23S rRNA and position 2 of adenine 37 in tRNAs. This Streptomyces coelicolor (strain ATCC BAA-471 / A3(2) / M145) protein is Probable dual-specificity RNA methyltransferase RlmN.